A 189-amino-acid polypeptide reads, in one-letter code: Segregation and condensation protein B (189 aa).

Belongs to the ScpB family. In terms of assembly, homodimer. Homodimerization may be required to stabilize the binding of ScpA to the Smc head domains. Component of a cohesin-like complex composed of ScpA, ScpB and the Smc homodimer, in which ScpA and ScpB bind to the head domain of Smc. The presence of the three proteins is required for the association of the complex with DNA.

It is found in the cytoplasm. Its function is as follows. Participates in chromosomal partition during cell division. May act via the formation of a condensin-like complex containing Smc and ScpA that pull DNA away from mid-cell into both cell halves. The polypeptide is Segregation and condensation protein B (Streptococcus pneumoniae serotype 19F (strain G54)).